The following is a 172-amino-acid chain: Large ribosomal subunit protein uL10 (172 aa).

This sequence belongs to the universal ribosomal protein uL10 family. In terms of assembly, part of the ribosomal stalk of the 50S ribosomal subunit. The N-terminus interacts with L11 and the large rRNA to form the base of the stalk. The C-terminus forms an elongated spine to which L12 dimers bind in a sequential fashion forming a multimeric L10(L12)X complex.

Functionally, forms part of the ribosomal stalk, playing a central role in the interaction of the ribosome with GTP-bound translation factors. This is Large ribosomal subunit protein uL10 from Xanthobacter autotrophicus (strain ATCC BAA-1158 / Py2).